The primary structure comprises 229 residues: Large ribosomal subunit protein uL1 (229 aa).

The protein belongs to the universal ribosomal protein uL1 family. In terms of assembly, part of the 50S ribosomal subunit.

Functionally, binds directly to 23S rRNA. The L1 stalk is quite mobile in the ribosome, and is involved in E site tRNA release. In terms of biological role, protein L1 is also a translational repressor protein, it controls the translation of the L11 operon by binding to its mRNA. This is Large ribosomal subunit protein uL1 from Pasteurella multocida (strain Pm70).